The chain runs to 149 residues: D-aminoacyl-tRNA deacylase (149 aa).

Residues 137–138 (GP) carry the Gly-cisPro motif, important for rejection of L-amino acids motif.

The protein belongs to the DTD family. Homodimer.

Its subcellular location is the cytoplasm. The catalysed reaction is glycyl-tRNA(Ala) + H2O = tRNA(Ala) + glycine + H(+). It catalyses the reaction a D-aminoacyl-tRNA + H2O = a tRNA + a D-alpha-amino acid + H(+). In terms of biological role, an aminoacyl-tRNA editing enzyme that deacylates mischarged D-aminoacyl-tRNAs. Also deacylates mischarged glycyl-tRNA(Ala), protecting cells against glycine mischarging by AlaRS. Acts via tRNA-based rather than protein-based catalysis; rejects L-amino acids rather than detecting D-amino acids in the active site. By recycling D-aminoacyl-tRNA to D-amino acids and free tRNA molecules, this enzyme counteracts the toxicity associated with the formation of D-aminoacyl-tRNA entities in vivo and helps enforce protein L-homochirality. The polypeptide is D-aminoacyl-tRNA deacylase (Caldicellulosiruptor bescii (strain ATCC BAA-1888 / DSM 6725 / KCTC 15123 / Z-1320) (Anaerocellum thermophilum)).